A 664-amino-acid chain; its full sequence is Macoilin (664 aa).

4 consecutive transmembrane segments (helical) span residues 28 to 48, 75 to 95, 120 to 140, and 154 to 174; these read TFLY…DFVL, AFSV…LLFI, VCLP…AIRF, and FAAH…KSYV. The segment covering 253 to 265 has biased composition (basic and acidic residues); it reads REKGKEKDKDAKK. The tract at residues 253–274 is disordered; sequence REKGKEKDKDAKKHNLGINNNN. Phosphoserine is present on S305. Over residues 320–348 the composition is skewed to polar residues; that stretch reads KNYKNASGVVNSSPRSHSATNGSIPSSSS. Residues 320 to 375 form a disordered region; it reads KNYKNASGVVNSSPRSHSATNGSIPSSSSKNEKKQKCTSKSPSTHKDLMENCIPNN. A glycan (N-linked (GlcNAc...) asparagine) is linked at N324. S332 bears the Phosphoserine mark. N-linked (GlcNAc...) asparagine glycosylation is found at N340 and N452. Positions 630 to 664 are disordered; it reads TSPLSPVSPHYSSKFVETSPSGLDPNASVYQPLKK. 2 positions are modified to phosphoserine: S631 and S634. N-linked (GlcNAc...) asparagine glycosylation occurs at N655.

Belongs to the macoilin family.

Its subcellular location is the rough endoplasmic reticulum membrane. It is found in the nucleus membrane. Functionally, plays a role in the regulation of neuronal activity. This Canis lupus familiaris (Dog) protein is Macoilin (MACO1).